A 504-amino-acid polypeptide reads, in one-letter code: Sodium-coupled neutral amino acid transporter 3 (504 aa).

N-linked (GlcNAc...) asparagine glycosylation is present at N74. 5 helical membrane-spanning segments follow: residues 83-103 (GILG…LFLL), 106-126 (VALL…VVGI), 144-164 (AAAL…LYII), 187-207 (MNGN…LALM), and 213-233 (LGYS…AVIY). An intrachain disulfide couples C240 to C275. N-linked (GlcNAc...) asparagine glycosylation is found at N247, N248, N252, and N323. The next 5 helical transmembrane spans lie at 324 to 344 (LSIA…YLTF), 366 to 386 (ILCV…IVLF), 408 to 428 (VLIA…APNI), 431 to 451 (IFGV…PAIF), and 471 to 491 (ALCF…FIII).

It belongs to the amino acid/polyamine transporter 2 family.

The protein localises to the cell membrane. Its subcellular location is the basolateral cell membrane. It carries out the reaction L-glutamine(out) + Na(+)(out) + H(+)(in) = L-glutamine(in) + Na(+)(in) + H(+)(out). It catalyses the reaction L-asparagine(out) + Na(+)(out) + H(+)(in) = L-asparagine(in) + Na(+)(in) + H(+)(out). The enzyme catalyses L-histidine(out) + Na(+)(out) + H(+)(in) = L-histidine(in) + Na(+)(in) + H(+)(out). Functionally, symporter that cotransports specific neutral amino acids and sodium ions, coupled to an H(+) antiporter activity. Mainly participates in the glutamate-GABA-glutamine cycle in brain where it transports L-glutamine from astrocytes in the intercellular space for the replenishment of both neurotransmitters glutamate and gamma-aminobutyric acid (GABA) in neurons and also functions as the major influx transporter in ganglion cells mediating the uptake of glutamine. The transport activity is specific for L-glutamine, L-histidine and L-asparagine. The transport is electroneutral coupled to the cotransport of 1 Na(+) and the antiport of 1 H(+). The transport is pH dependent, saturable, Li(+) tolerant and functions in both direction depending on the concentration gradients of its substrates and cotransported ions. Also mediates an amino acid-gated H(+) conductance that is not stoichiometrically coupled to the amino acid transport but which influences the ionic gradients that drive the amino acid transport. In addition, may play a role in nitrogen metabolism, amino acid homeostasis, glucose metabolism and renal ammoniagenesis. The polypeptide is Sodium-coupled neutral amino acid transporter 3 (Homo sapiens (Human)).